The sequence spans 388 residues: LL-diaminopimelate aminotransferase (388 aa).

Substrate contacts are provided by Tyr-16 and Gly-41. Pyridoxal 5'-phosphate-binding positions include Tyr-70, 104-105 (SK), Tyr-129, Asn-179, Tyr-210, and 239-241 (SLS). The substrate site is built by Lys-105, Tyr-129, and Asn-179. N6-(pyridoxal phosphate)lysine is present on Lys-242. Arg-250 lines the pyridoxal 5'-phosphate pocket. Position 368 (Arg-368) interacts with substrate.

It belongs to the class-I pyridoxal-phosphate-dependent aminotransferase family. LL-diaminopimelate aminotransferase subfamily. As to quaternary structure, homodimer. Requires pyridoxal 5'-phosphate as cofactor.

The enzyme catalyses (2S,6S)-2,6-diaminopimelate + 2-oxoglutarate = (S)-2,3,4,5-tetrahydrodipicolinate + L-glutamate + H2O + H(+). Its pathway is amino-acid biosynthesis; L-lysine biosynthesis via DAP pathway; LL-2,6-diaminopimelate from (S)-tetrahydrodipicolinate (aminotransferase route): step 1/1. Involved in the synthesis of meso-diaminopimelate (m-DAP or DL-DAP), required for both lysine and peptidoglycan biosynthesis. Catalyzes the direct conversion of tetrahydrodipicolinate to LL-diaminopimelate. This is LL-diaminopimelate aminotransferase from Maridesulfovibrio salexigens (strain ATCC 14822 / DSM 2638 / NCIMB 8403 / VKM B-1763) (Desulfovibrio salexigens).